An 89-amino-acid chain; its full sequence is Large ribosomal subunit protein bL27 (89 aa).

Residues 1-21 form a disordered region; it reads MAHKKAGGSSRNGRDSKGKRL.

The protein belongs to the bacterial ribosomal protein bL27 family.

In Bradyrhizobium diazoefficiens (strain JCM 10833 / BCRC 13528 / IAM 13628 / NBRC 14792 / USDA 110), this protein is Large ribosomal subunit protein bL27.